The primary structure comprises 337 residues: Cytoskeleton protein RodZ (337 aa).

At 1–111 (MNTEATHDQN…LGKRRKKRDG (111 aa)) the chain is on the cytoplasmic side. Residues 19 to 71 (LRNAREQLGLSQQAVAERLCLKVSTVRDIEEDKAPADLASTFLRGYIRSYARL) enclose the HTH cro/C1-type domain. The H-T-H motif DNA-binding region spans 30–49 (QQAVAERLCLKVSTVRDIEE). A helical; Signal-anchor for type II membrane protein transmembrane segment spans residues 112–132 (WLMTFTWLVLFVVIGLSGAWW). Residues 133–337 (WQDHKAQQEE…TLNAEQSPAQ (205 aa)) lie on the Periplasmic side of the membrane. Polar residues predominate over residues 145 to 167 (TMADQSSAELSSNSEQGQSVPLN). The disordered stretch occupies residues 145-236 (TMADQSSAEL…TAATTPDGAA (92 aa)). Over residues 168–207 (TSTTTDPATTSTPPASVDTTATNTQTPAVTAPAPAVDPQQ) the composition is skewed to low complexity. Residues 208–218 (NAVVSPSQANV) are compositionally biased toward polar residues. The span at 219-236 (DTAATPAPTAATTPDGAA) shows a compositional bias: low complexity.

This sequence belongs to the RodZ family.

It localises to the cell inner membrane. Its function is as follows. Cytoskeletal protein that is involved in cell-shape control through regulation of the length of the long axis. The polypeptide is Cytoskeleton protein RodZ (Escherichia coli O139:H28 (strain E24377A / ETEC)).